The following is a 624-amino-acid chain: APC membrane recruitment protein 2 (624 aa).

Disordered regions lie at residues 1 to 308 (MDSH…PPSE) and 342 to 596 (EDVG…IPVS). Over residues 74-91 (SGKKEDAGGGEAQGKDAP) the composition is skewed to basic and acidic residues. The segment covering 101 to 111 (SASSSVAKSHS) has biased composition (low complexity). Basic and acidic residues-rich tracts occupy residues 120–132 (GRPE…ENAE) and 247–258 (RRLEELCGERPD). 2 stretches are compositionally biased toward low complexity: residues 272–282 (ITGDIPITTIP) and 295–307 (AAAP…DPPS). Over residues 406 to 416 (TGGGGGGGGGT) the composition is skewed to gly residues. Over residues 450 to 464 (NNKEEQKGREKEQHE) the composition is skewed to basic and acidic residues. Over residues 535 to 549 (PITTTCSLKTPSSTV) the composition is skewed to polar residues.

This sequence belongs to the Amer family.

It is found in the cell membrane. Negative regulator of the canonical Wnt signaling pathway involved in neuroectodermal patterning. Acts by specifically binding phosphatidylinositol 4,5-bisphosphate (PtdIns(4,5)P2), translocating to the cell membrane and interacting with key regulators of the canonical Wnt signaling pathway, such as components of the beta-catenin destruction complex. This chain is APC membrane recruitment protein 2 (AMER2), found in Gallus gallus (Chicken).